The primary structure comprises 381 residues: ELMO domain-containing protein 3 (381 aa).

The region spanning 170 to 324 (THGRVLQTIY…DLEALAKKSP (155 aa)) is the ELMO domain.

As to expression, both isoform 1 and isoform 2 are widely expressed.

The protein localises to the cell projection. It is found in the stereocilium. The protein resides in the kinocilium. It localises to the cytoplasm. Its subcellular location is the cytoskeleton. Its function is as follows. Acts as a GTPase-activating protein (GAP) for ARL2 with low specific activity. In Mus musculus (Mouse), this protein is ELMO domain-containing protein 3 (Elmod3).